Reading from the N-terminus, the 464-residue chain is 3-isopropylmalate dehydratase large subunit (464 aa).

Residues Cys-337, Cys-397, and Cys-400 each contribute to the [4Fe-4S] cluster site.

The protein belongs to the aconitase/IPM isomerase family. LeuC type 1 subfamily. Heterodimer of LeuC and LeuD. The cofactor is [4Fe-4S] cluster.

It catalyses the reaction (2R,3S)-3-isopropylmalate = (2S)-2-isopropylmalate. It functions in the pathway amino-acid biosynthesis; L-leucine biosynthesis; L-leucine from 3-methyl-2-oxobutanoate: step 2/4. Its function is as follows. Catalyzes the isomerization between 2-isopropylmalate and 3-isopropylmalate, via the formation of 2-isopropylmaleate. In Bacillus cereus (strain ATCC 10987 / NRS 248), this protein is 3-isopropylmalate dehydratase large subunit.